The sequence spans 493 residues: Glycerol kinase 2 (493 aa).

Serine 12 serves as a coordination point for ADP. Residues serine 12 and threonine 13 each coordinate ATP. A sn-glycerol 3-phosphate-binding site is contributed by serine 12. ADP is bound at residue lysine 16. Residues arginine 82, glutamate 83, tyrosine 134, and aspartate 243 each contribute to the sn-glycerol 3-phosphate site. Glycerol-binding residues include arginine 82, glutamate 83, tyrosine 134, aspartate 243, and glutamine 244. 2 residues coordinate ADP: threonine 265 and glycine 308. ATP is bound by residues threonine 265, glycine 308, and asparagine 312. Asparagine 413 lines the ADP pocket.

It belongs to the FGGY kinase family. Homotetramer and homodimer (in equilibrium).

It catalyses the reaction glycerol + ATP = sn-glycerol 3-phosphate + ADP + H(+). The protein operates within polyol metabolism; glycerol degradation via glycerol kinase pathway; sn-glycerol 3-phosphate from glycerol: step 1/1. Its activity is regulated as follows. Activated by phosphorylation and inhibited by fructose 1,6-bisphosphate (FBP). Functionally, key enzyme in the regulation of glycerol uptake and metabolism. Catalyzes the phosphorylation of glycerol to yield sn-glycerol 3-phosphate. This chain is Glycerol kinase 2, found in Clostridium tetani (strain Massachusetts / E88).